A 300-amino-acid polypeptide reads, in one-letter code: 4-hydroxy-tetrahydrodipicolinate synthase (300 aa).

Thr-45 contributes to the pyruvate binding site. Tyr-140 serves as the catalytic Proton donor/acceptor. Catalysis depends on Lys-169, which acts as the Schiff-base intermediate with substrate. Ile-210 lines the pyruvate pocket.

It belongs to the DapA family. As to quaternary structure, homotetramer; dimer of dimers.

Its subcellular location is the cytoplasm. It catalyses the reaction L-aspartate 4-semialdehyde + pyruvate = (2S,4S)-4-hydroxy-2,3,4,5-tetrahydrodipicolinate + H2O + H(+). The protein operates within amino-acid biosynthesis; L-lysine biosynthesis via DAP pathway; (S)-tetrahydrodipicolinate from L-aspartate: step 3/4. Functionally, catalyzes the condensation of (S)-aspartate-beta-semialdehyde [(S)-ASA] and pyruvate to 4-hydroxy-tetrahydrodipicolinate (HTPA). The protein is 4-hydroxy-tetrahydrodipicolinate synthase of Helicobacter pylori (strain Shi470).